The chain runs to 266 residues: Probable carboxylesterase Os04g0669500 (266 aa).

Active-site charge relay system residues include Ser154, Asp208, and His240.

This sequence belongs to the AB hydrolase superfamily. AB hydrolase 2 family.

Functionally, possesses carboxylesterase activity in vitro. This is Probable carboxylesterase Os04g0669500 from Oryza sativa subsp. japonica (Rice).